The following is a 121-amino-acid chain: DNA-directed RNA polymerase subunit omega (121 aa).

The interval Asp-95–Phe-121 is disordered. The segment covering Gln-103 to Phe-121 has biased composition (acidic residues).

It belongs to the RNA polymerase subunit omega family. As to quaternary structure, the RNAP catalytic core consists of 2 alpha, 1 beta, 1 beta' and 1 omega subunit. When a sigma factor is associated with the core the holoenzyme is formed, which can initiate transcription.

It carries out the reaction RNA(n) + a ribonucleoside 5'-triphosphate = RNA(n+1) + diphosphate. Functionally, promotes RNA polymerase assembly. Latches the N- and C-terminal regions of the beta' subunit thereby facilitating its interaction with the beta and alpha subunits. This is DNA-directed RNA polymerase subunit omega from Magnetococcus marinus (strain ATCC BAA-1437 / JCM 17883 / MC-1).